The sequence spans 555 residues: Potassium-transporting ATPase potassium-binding subunit (555 aa).

10 consecutive transmembrane segments (helical) span residues 2–22 (IWVA…PTGI), 60–80 (QYAL…YFIF), 130–150 (IGIT…VMAF), 173–193 (VFLP…VPQT), 246–266 (MSNI…PFTY), 278–298 (ILFV…TTSE), 374–394 (AGFV…GLMV), 412–432 (LIAV…ALAL), 483–503 (LVMF…AASL), and 525–545 (GIFI…MLVL).

The protein belongs to the KdpA family. In terms of assembly, the system is composed of three essential subunits: KdpA, KdpB and KdpC.

The protein localises to the cell membrane. Part of the high-affinity ATP-driven potassium transport (or Kdp) system, which catalyzes the hydrolysis of ATP coupled with the electrogenic transport of potassium into the cytoplasm. This subunit binds the extracellular potassium ions and delivers the ions to the membrane domain of KdpB through an intramembrane tunnel. In Bacillus cereus (strain G9842), this protein is Potassium-transporting ATPase potassium-binding subunit.